The chain runs to 99 residues: Cytochrome c-555 (99 aa).

Heme c contacts are provided by Cys-23, Cys-26, His-27, and Met-73.

Binds 1 heme c group covalently per subunit.

The chain is Cytochrome c-555 from Prosthecochloris aestuarii.